The primary structure comprises 167 residues: MDNSMDINDILLSDDNDYKSYDEDDDSISDIGETSDDCCTTKQSDSRIESFKFDETTQSPHPKQLSERIKAIKQRYTRRISLFEITGILSESYNLLQRGRIPLLNDLTEETFKDSIINIMFKEIEQGNCPIVIQKNGELLSLTDFDKKGVQYHLDYIKTIWRNQRKL.

Residues 15 to 41 (DNDYKSYDEDDDSISDIGETSDDCCTT) are disordered. Acidic residues predominate over residues 22-36 (DEDDDSISDIGETSD).

It belongs to the poxviridae DNA-directed RNA polymerase 19 kDa subunit family. The DNA-dependent RNA polymerase used for intermediate and late genes expression consists of eight subunits (147) kDa, 133 kDa, 35 kDa, 30 kDa, 22 kDa, 19 kDa, 18 kDa and 7 kDa totalling more than 500 kDa in mass. The same holoenzyme, with the addition of the transcription-specificity factor RAP94, is used for early gene expression.

The protein resides in the virion. It carries out the reaction RNA(n) + a ribonucleoside 5'-triphosphate = RNA(n+1) + diphosphate. Its function is as follows. Part of the DNA-dependent RNA polymerase which catalyzes the transcription of viral DNA into RNA using the four ribonucleoside triphosphates as substrates. Responsible for the transcription of early, intermediate and late genes. DNA-dependent RNA polymerase associates with the early transcription factor (ETF) thereby allowing the early genes transcription. Late transcription, and probably also intermediate transcription, require newly synthesized RNA polymerase. The protein is DNA-directed RNA polymerase 19 kDa subunit (RPO19) of Vertebrata (FPV).